The following is a 430-amino-acid chain: Microtubule-associated protein tau (430 aa).

Residues 1–16 (MAEPRQEFDTAEDHAE) show a composition bias toward basic and acidic residues. Residues 1 to 245 (MAEPRQEFDT…PVPMPDLKNV (245 aa)) form a disordered region. An N-acetylalanine modification is found at Ala-2. A Phosphotyrosine modification is found at Tyr-18. A Glycyl lysine isopeptide (Lys-Gly) (interchain with G-Cter in ubiquitin) cross-link involves residue Lys-31. Phosphoserine is present on residues Ser-33 and Ser-48. Residues 48 to 58 (SETSDAKSTPT) show a composition bias toward polar residues. Phosphothreonine is present on residues Thr-56, Thr-58, and Thr-98. The segment covering 117-133 (KGKEGTGSEDRKAKGAD) has biased composition (basic and acidic residues). At Thr-142 the chain carries Phosphothreonine. Arg-144 carries the post-translational modification Omega-N-methylarginine. Lys-152 bears the N6,N6-dimethyllysine; alternate mark. Residue Lys-152 is modified to N6-acetyllysine; alternate. Phosphothreonine is present on residues Thr-158, Thr-164, Thr-165, and Thr-170. Residues 161-203 (PAKTTPSPKTPPGTGEPAKSGDRSGYSSPGSPGTPGSRSRTPS) are compositionally biased toward low complexity. Ser-180 and Ser-184 each carry phosphoserine. A Phosphotyrosine modification is found at Tyr-186. Residues Ser-187, Ser-188, and Ser-191 each carry the phosphoserine modification. Phosphothreonine occurs at positions 194 and 201. The residue at position 203 (Ser-203) is a Phosphoserine. A Phosphothreonine modification is found at Thr-206. Lys-214 is subject to N6-acetyllysine. Residue Thr-220 is modified to Phosphothreonine. Phosphoserine occurs at positions 224 and 226. Tau/MAP repeat units follow at residues 233-263 (QTAPVPMPDLKNVRSKIGSTENLKHQPGGGK), 264-294 (VQIINKKLDLSNVQSKCGSKDNIKHVPGGGS), 295-325 (VQIVYKPVDLSKVTSKCGSLGNIHHKPGGGQ), and 326-357 (VEVKSEKLDFKDRVQSKIGSLDNITHVPGGGN). Residue Lys-243 forms a Glycyl lysine isopeptide (Lys-Gly) (interchain with G-Cter in ubiquitin) linkage. Lys-248 is subject to N6-acetyllysine; alternate. At Lys-248 the chain carries N6-methyllysine; alternate. Lys-248 is covalently cross-linked (Glycyl lysine isopeptide (Lys-Gly) (interchain with G-Cter in ubiquitin); alternate). At Ser-251 the chain carries Phosphoserine. Lys-256 is covalently cross-linked (Glycyl lysine isopeptide (Lys-Gly) (interchain with G-Cter in ubiquitin)). Lys-270 is subject to N6-acetyllysine; alternate. Lys-270 is covalently cross-linked (Glycyl lysine isopeptide (Lys-Gly) (interchain with G-Cter in ubiquitin); alternate). A phosphoserine mark is found at Ser-274 and Ser-278. At Lys-279 the chain carries N6-acetyllysine. A disulfide bond links Cys-280 and Cys-311. Phosphoserine is present on Ser-282. At Lys-287 the chain carries N6-acetyllysine; alternate. Lys-287 participates in a covalent cross-link: Glycyl lysine isopeptide (Lys-Gly) (interchain with G-Cter in ubiquitin); alternate. A Phosphoserine modification is found at Ser-294. At Lys-300 the chain carries N6,N6-dimethyllysine; alternate. Lys-300, Lys-306, and Lys-310 each carry N6-acetyllysine; alternate. Residues Lys-300, Lys-306, and Lys-310 each participate in a glycyl lysine isopeptide (Lys-Gly) (interchain with G-Cter in ubiquitin); alternate cross-link. The residue at position 313 (Ser-313) is a Phosphoserine. N6-acetyllysine; alternate is present on residues Lys-320, Lys-332, and Lys-336. Glycyl lysine isopeptide (Lys-Gly) (interchain with G-Cter in ubiquitin); alternate cross-links involve residues Lys-320, Lys-332, and Lys-336. The residue at position 338 (Arg-338) is an Omega-N-methylarginine. Ser-341 carries the phosphoserine modification. A Glycyl lysine isopeptide (Lys-Gly) (interchain with G-Cter in ubiquitin) cross-link involves residue Lys-342. Ser-345 carries the post-translational modification Phosphoserine. Lys-358 carries the post-translational modification N6-acetyllysine; alternate. Lys-358 is covalently cross-linked (Glycyl lysine isopeptide (Lys-Gly) (interchain with G-Cter in ubiquitin); alternate). Lys-364 participates in a covalent cross-link: Glycyl lysine isopeptide (Lys-Gly) (interchain with G-Cter in ubiquitin). Lys-374 carries the N6-acetyllysine; alternate modification. A Glycyl lysine isopeptide (Lys-Gly) (interchain with G-Cter in ubiquitin); alternate cross-link involves residue Lys-374. Position 383 is a phosphotyrosine (Tyr-383). Phosphoserine occurs at positions 385 and 389. A disordered region spans residues 387-406 (VVSGDTSPRHLSNVSSTGSI). Residues 390 to 406 (GDTSPRHLSNVSSTGSI) show a composition bias toward polar residues. Thr-392 carries the phosphothreonine modification. Residues Ser-393, Ser-398, Ser-405, and Ser-411 each carry the phosphoserine modification. Thr-416 carries the phosphothreonine modification.

As to quaternary structure, interacts with MARK1, MARK2, MARK3 and MARK4. Interacts with SQSTM1 when polyubiquitinated. Interacts with PSMC2 through SQSTM1. Interacts with FKBP4. Binds to CSNK1D. Interacts with SGK1. Interacts with PIN1. Interacts with LRRK2. Interacts with LRP1, leading to endocytosis; this interaction is reduced in the presence of LRPAP1/RAP. In terms of processing, polyubiquitinated. Requires functional TRAF6 and may provoke SQSTM1-dependent degradation by the proteasome. Phosphorylation at various serine and threonine residues in S-P or T-P motifs by proline-directed protein kinases (PDPK1, CDK1, CDK5, GSK3, MAPK) (a few sites per protein in interphase, more in mitosis), and at serine residues in K-X-G-S motifs by MAP/microtubule affinity-regulating kinase (MARK1, MARK2, MARK3 or MARK4), causing detachment from microtubules, and their disassembly. Phosphorylation at Ser-345 by BRSK1 and BRSK2 in neurons affects ability to bind microtubules and plays a role in neuron polarization. Phosphorylated by PHK. Dephosphorylation at several serine and threonine residues by the serine/threonine phosphatase PPP5C. Post-translationally, hyperphosphorylated (in particular at Thr-170, Ser-191, Thr-194, Ser-251, and Ser-345) during hibernation. Phosphorylation is fully reversible after arousal. Highly phosphorylated tau contains a number of paired helical filaments (PHFs)-like epitopes. PHF-like phosphorylation is not associated with fibril formation. Distribution of PHF-like tau is more intense in the entorhinal cortex, hippocampus and isocortical areas. PHF-like phosphorylation-dephosphorylation during hibernation cycle is synchronized with regression-re-establishment of afferentation. It may reflect a protective mechanism in an unfavorable environment.

Its subcellular location is the cytoplasm. It localises to the cytosol. The protein resides in the cell membrane. It is found in the cytoskeleton. The protein localises to the cell projection. Its subcellular location is the axon. It localises to the dendrite. Its function is as follows. Promotes microtubule assembly and stability, and might be involved in the establishment and maintenance of neuronal polarity. The C-terminus binds axonal microtubules while the N-terminus binds neural plasma membrane components, suggesting that tau functions as a linker protein between both. Axonal polarity is predetermined by tau localization (in the neuronal cell) in the domain of the cell body defined by the centrosome. The short isoforms allow plasticity of the cytoskeleton whereas the longer isoforms may preferentially play a role in its stabilization. The sequence is that of Microtubule-associated protein tau (MAPT) from Spermophilus citellus (European ground squirrel).